The sequence spans 615 residues: MSKIIGIDLGTTNSAVAVLEGGEPKIITNPDGGRTTPSVVSFKNGESQVGDVAKRQAITNPDTIISIKSHMGEAGYKVNANGKDYTPQEISAMILQYIKGYAEDYLGEKVEKAVITVPAYFNDAQRQATKDAGKIAGLEVERIINEPTAAALAYGLDKLDKDEKILVYDLGGGTFDVSILELGDGVFEVLSTNGDTHLGGDDFDNKVIDYLAEQFKSENGVDLKDDKLALQRLKDAAESAKKTLSSANEAQIDLPFIASGDNGPLHLQTSLTRAKFNELTADLIKKAEQPVLSALKDAGLSFSDIDEVILNGGSTRIPAVQESVKKMTGKEPNHSINPDEAVALGAAVQGGVITGDVKDVVLLDVTPLSLGIETMGGVFTKLIERNTTIPTSKSQVFSTAADNQPAVDIHVLQGERSMAADNKTLGRFQLADIPAAPRGVPQIEVTFDIDRNGIVNVSAKDLGTQKEQKITIQAAGGLSDEEIEKMMNDAKANEEADAKKKEAVDTRNEADQLIFQTEKTLEEVGDKLGDDEKKPTQDALEALKKAKEDAAADDADLTDLKAKSEELTKVAGELAMKLYQQAAPKDGAEGDAKSADDNTVDGDFEEVDPNKDDKK.

Thr-174 carries the phosphothreonine; by autocatalysis modification. Positions 581–615 (QAAPKDGAEGDAKSADDNTVDGDFEEVDPNKDDKK) are disordered. Over residues 586–596 (DGAEGDAKSAD) the composition is skewed to basic and acidic residues. Over residues 598–607 (NTVDGDFEEV) the composition is skewed to acidic residues.

This sequence belongs to the heat shock protein 70 family.

In terms of biological role, acts as a chaperone. The chain is Chaperone protein DnaK from Leuconostoc mesenteroides subsp. mesenteroides (strain ATCC 8293 / DSM 20343 / BCRC 11652 / CCM 1803 / JCM 6124 / NCDO 523 / NBRC 100496 / NCIMB 8023 / NCTC 12954 / NRRL B-1118 / 37Y).